Here is a 233-residue protein sequence, read N- to C-terminus: Glucosamine-6-phosphate deaminase (233 aa).

The active-site Proton acceptor; for enolization step is D62. The active-site For ring-opening step is N128. Catalysis depends on H130, which acts as the Proton acceptor; for ring-opening step. E135 serves as the catalytic For ring-opening step.

Belongs to the glucosamine/galactosamine-6-phosphate isomerase family. NagB subfamily.

It catalyses the reaction alpha-D-glucosamine 6-phosphate + H2O = beta-D-fructose 6-phosphate + NH4(+). It functions in the pathway amino-sugar metabolism; N-acetylneuraminate degradation; D-fructose 6-phosphate from N-acetylneuraminate: step 5/5. Its function is as follows. Catalyzes the reversible isomerization-deamination of glucosamine 6-phosphate (GlcN6P) to form fructose 6-phosphate (Fru6P) and ammonium ion. The polypeptide is Glucosamine-6-phosphate deaminase (Streptococcus agalactiae serotype Ia (strain ATCC 27591 / A909 / CDC SS700)).